We begin with the raw amino-acid sequence, 460 residues long: Ufm1-specific protease 2 (460 aa).

Active-site residues include Cys-293, Asp-417, and His-419.

It belongs to the peptidase C78 family.

It is found in the endoplasmic reticulum. The protein resides in the cytoplasm. It localises to the nucleus. Functionally, thiol-dependent isopeptidase that specifically cleaves UFM1, a ubiquitin-like modifier protein, from conjugated proteins. While it is also able to mediate the processing of UFM1 precursors, a prerequisite for conjugation reactions, UFSP2 mainly acts as a protein deUFMylase that mediates deconjugation of UFM1 from target proteins. The sequence is that of Ufm1-specific protease 2 from Gallus gallus (Chicken).